The primary structure comprises 163 residues: Large ribosomal subunit protein uL10 (163 aa).

Belongs to the universal ribosomal protein uL10 family. In terms of assembly, part of the ribosomal stalk of the 50S ribosomal subunit. The N-terminus interacts with L11 and the large rRNA to form the base of the stalk. The C-terminus forms an elongated spine to which L12 dimers bind in a sequential fashion forming a multimeric L10(L12)X complex.

Its function is as follows. Forms part of the ribosomal stalk, playing a central role in the interaction of the ribosome with GTP-bound translation factors. In Mannheimia succiniciproducens (strain KCTC 0769BP / MBEL55E), this protein is Large ribosomal subunit protein uL10.